The primary structure comprises 325 residues: Fructose-1,6-bisphosphatase class 1 (325 aa).

Mg(2+)-binding residues include glutamate 84, aspartate 103, leucine 105, and aspartate 106. Substrate-binding positions include aspartate 106–serine 109, asparagine 196, and lysine 262. Glutamate 268 serves as a coordination point for Mg(2+).

This sequence belongs to the FBPase class 1 family. Homotetramer. Mg(2+) is required as a cofactor.

It is found in the cytoplasm. The catalysed reaction is beta-D-fructose 1,6-bisphosphate + H2O = beta-D-fructose 6-phosphate + phosphate. The protein operates within carbohydrate biosynthesis; gluconeogenesis. The polypeptide is Fructose-1,6-bisphosphatase class 1 (Shewanella baltica (strain OS195)).